We begin with the raw amino-acid sequence, 304 residues long: RNA polymerase II holoenzyme cyclin-like subunit (304 aa).

The 132-residue stretch at 43 to 174 (TIHDSKANKQ…LIEELQSYLI (132 aa)) folds into the Cyclin N-terminal domain.

It belongs to the cyclin family. Cyclin C subfamily. Component of the SRB8-11 complex, a regulatory module of the Mediator complex.

It localises to the nucleus. Component of the SRB8-11 complex. The SRB8-11 complex is a regulatory module of the Mediator complex which is itself involved in regulation of basal and activated RNA polymerase II-dependent transcription. The SRB8-11 complex may be involved in the transcriptional repression of a subset of genes regulated by Mediator. It may inhibit the association of the Mediator complex with RNA polymerase II to form the holoenzyme complex. The SRB8-11 complex phosphorylates the C-terminal domain (CTD) of the largest subunit of RNA polymerase II. The chain is RNA polymerase II holoenzyme cyclin-like subunit (SSN8) from Kluyveromyces lactis (strain ATCC 8585 / CBS 2359 / DSM 70799 / NBRC 1267 / NRRL Y-1140 / WM37) (Yeast).